The chain runs to 361 residues: MQPRDLSAHAPYVPGRGTEEVARELGMDPEDLTKLSSNENPHGPSPKAVAAIEDAAPTVSVYPKTAHTDLTERLADKWGLAPEQVWVSPGADGSIDYLTRAVLEPDDRILEPAPGFSYYSMSARYHHGDAVQYEVSKDDDFEQTADLVLDAYDGERMVYLTTPHNPTGSVLPREELVELAESVEEHTLLVVDEAYGEFAEEPSAIDLLSEYDNVAALRTFSKAYGLAGLRIGYACVPEAWADAYARVNTPFAASEVACRAALAALDDEEHVEKSVESARWSRDYLREHLDAPTWESEGNFVLVEVGDATAVTEAAQREGVIVRDCGSFGLPECIRVSCGTETQTKRAVDVLNRIVSEVPTA.

The segment at 26–45 (GMDPEDLTKLSSNENPHGPS) is disordered. Lysine 222 carries the post-translational modification N6-(pyridoxal phosphate)lysine.

It belongs to the class-II pyridoxal-phosphate-dependent aminotransferase family. Histidinol-phosphate aminotransferase subfamily. Pyridoxal 5'-phosphate serves as cofactor.

The enzyme catalyses L-histidinol phosphate + 2-oxoglutarate = 3-(imidazol-4-yl)-2-oxopropyl phosphate + L-glutamate. It functions in the pathway amino-acid biosynthesis; L-histidine biosynthesis; L-histidine from 5-phospho-alpha-D-ribose 1-diphosphate: step 7/9. The sequence is that of Histidinol-phosphate aminotransferase (hisC) from Haloferax volcanii (strain ATCC 29605 / DSM 3757 / JCM 8879 / NBRC 14742 / NCIMB 2012 / VKM B-1768 / DS2) (Halobacterium volcanii).